The primary structure comprises 485 residues: Glutamyl-tRNA(Gln) amidotransferase subunit A (485 aa).

Catalysis depends on charge relay system residues K78 and S153. S177 acts as the Acyl-ester intermediate in catalysis.

This sequence belongs to the amidase family. GatA subfamily. As to quaternary structure, heterotrimer of A, B and C subunits.

It catalyses the reaction L-glutamyl-tRNA(Gln) + L-glutamine + ATP + H2O = L-glutaminyl-tRNA(Gln) + L-glutamate + ADP + phosphate + H(+). Functionally, allows the formation of correctly charged Gln-tRNA(Gln) through the transamidation of misacylated Glu-tRNA(Gln) in organisms which lack glutaminyl-tRNA synthetase. The reaction takes place in the presence of glutamine and ATP through an activated gamma-phospho-Glu-tRNA(Gln). In Bacillus cereus (strain 03BB102), this protein is Glutamyl-tRNA(Gln) amidotransferase subunit A.